The primary structure comprises 251 residues: Pyrroloquinoline-quinone synthase (251 aa).

The protein belongs to the PqqC family.

The catalysed reaction is 6-(2-amino-2-carboxyethyl)-7,8-dioxo-1,2,3,4,7,8-hexahydroquinoline-2,4-dicarboxylate + 3 O2 = pyrroloquinoline quinone + 2 H2O2 + 2 H2O + H(+). It participates in cofactor biosynthesis; pyrroloquinoline quinone biosynthesis. In terms of biological role, ring cyclization and eight-electron oxidation of 3a-(2-amino-2-carboxyethyl)-4,5-dioxo-4,5,6,7,8,9-hexahydroquinoline-7,9-dicarboxylic-acid to PQQ. This is Pyrroloquinoline-quinone synthase from Pseudomonas syringae pv. syringae (strain B728a).